The sequence spans 362 residues: 3-dehydroquinate synthase (362 aa).

NAD(+) contacts are provided by residues 71-76, 105-109, 129-130, Lys142, Lys151, and 169-172; these read DGEQYK, GVVGD, TT, and CLKT. The Zn(2+) site is built by Glu184, His247, and His264.

The protein belongs to the sugar phosphate cyclases superfamily. Dehydroquinate synthase family. It depends on Co(2+) as a cofactor. The cofactor is Zn(2+). Requires NAD(+) as cofactor.

Its subcellular location is the cytoplasm. It catalyses the reaction 7-phospho-2-dehydro-3-deoxy-D-arabino-heptonate = 3-dehydroquinate + phosphate. It functions in the pathway metabolic intermediate biosynthesis; chorismate biosynthesis; chorismate from D-erythrose 4-phosphate and phosphoenolpyruvate: step 2/7. Its function is as follows. Catalyzes the conversion of 3-deoxy-D-arabino-heptulosonate 7-phosphate (DAHP) to dehydroquinate (DHQ). The protein is 3-dehydroquinate synthase of Shigella flexneri serotype 5b (strain 8401).